We begin with the raw amino-acid sequence, 144 residues long: Nucleoside diphosphate kinase (144 aa).

ATP-binding residues include K11, F59, R87, T93, R104, and N114. The active-site Pros-phosphohistidine intermediate is H117.

The protein belongs to the NDK family. As to quaternary structure, homotetramer. Mg(2+) serves as cofactor.

The protein localises to the cytoplasm. It catalyses the reaction a 2'-deoxyribonucleoside 5'-diphosphate + ATP = a 2'-deoxyribonucleoside 5'-triphosphate + ADP. The catalysed reaction is a ribonucleoside 5'-diphosphate + ATP = a ribonucleoside 5'-triphosphate + ADP. Major role in the synthesis of nucleoside triphosphates other than ATP. The ATP gamma phosphate is transferred to the NDP beta phosphate via a ping-pong mechanism, using a phosphorylated active-site intermediate. This Baumannia cicadellinicola subsp. Homalodisca coagulata protein is Nucleoside diphosphate kinase.